The sequence spans 583 residues: Nuclear distribution protein nudE homolog 1 (583 aa).

Residues 14 to 195 (ATLEDTLGWY…QDKFKKQESR (182 aa)) are a coiled coil. Disordered regions lie at residues 34-68 (LAEFRDSSRELEQELEKDIERAEKQERHHQEKAET), 211-339 (TFDG…TSNS), and 358-583 (HSVR…GETY). Residues 35-67 (AEFRDSSRELEQELEKDIERAEKQERHHQEKAE) show a composition bias toward basic and acidic residues. 5 stretches are compositionally biased toward polar residues: residues 219–235 (PGSTASSPLITTPTDSK), 279–319 (RSRL…TMRT), 329–339 (SASNKLPTSNS), 379–392 (NVYSATNMPASITI), and 399–422 (SGSAASSVTGDDPTPTNIPTSTPK). A compositionally biased stretch (low complexity) spans 453–469 (RPSSRASTSYATSYARP). Over residues 529 to 538 (RRGTYSSQGG) the composition is skewed to polar residues.

It belongs to the nudE family. Self-associates. Interacts with PAC1.

The protein resides in the cytoplasm. The protein localises to the cytoskeleton. Required for nuclear migration. The chain is Nuclear distribution protein nudE homolog 1 (NDE1) from Gibberella zeae (strain ATCC MYA-4620 / CBS 123657 / FGSC 9075 / NRRL 31084 / PH-1) (Wheat head blight fungus).